The following is a 598-amino-acid chain: MEIALGPLENGGAMTIRGGGEETAGCSQAAPTAGLGDGSQEPAPRGRGCSARRGAEPGERPLPPQPPELPQSRRSPLEEEEGEGDPGLSVAEEQTLGAGALHHQRVLINISGLRFETQLGTLAQFPNTLLGDPAKRLRYFDPLRNEYFFDRNRPSFDGILYYYQSGGRLRRPVNVSLDVFADEIRFYQLGDEAMERFREDEGFIKDEEKPLPRNEFQRQVWLIFEYPESSGSARAIAIVSVLVILISIITFCLETLPEFKDERELLRHPPVPHQPPAAPALGANGSGAVAPASGSTVAPLLPRTLADPFFIVETTCVIWFTFELLVRFFACPSKAEFSRNIMNIIDIVAIFPYFITLGTELAEQQPGGGGGGQNGQQAMSLAILRVIRLVRVFRIFKLSRHSKGLQILGKTLQASMRELGLLIFFLFIGVILFSSAVYFAEADNQGTHFSSIPDAFWWAVVTMTTVGYGDMRPITVGGKIVGSLCAIAGVLTIALPVPVIVSNFNYFYHRETDHEEQAALKEEPGSQSRGTSLDAGGQRKASWSKASLCKAGGSLETADSVRRGSCLLEKYNLKAKSNVDLRRSLYALCLDTSRETDL.

The disordered stretch occupies residues 1–89 (MEIALGPLEN…EEGEGDPGLS (89 aa)). A tetramerization domain region spans residues 1-195 (MEIALGPLEN…FYQLGDEAME (195 aa)). The Cytoplasmic portion of the chain corresponds to 1–231 (MEIALGPLEN…LIFEYPESSG (231 aa)). The segment covering 60-69 (RPLPPQPPEL) has biased composition (pro residues). K205 is covalently cross-linked (Glycyl lysine isopeptide (Lys-Gly) (interchain with G-Cter in SUMO)). The helical transmembrane segment at 232-253 (SARAIAIVSVLVILISIITFCL) threads the bilayer. Residues 254-308 (ETLPEFKDERELLRHPPVPHQPPAAPALGANGSGAVAPASGSTVAPLLPRTLADP) are Extracellular-facing. The helical transmembrane segment at 309–330 (FFIVETTCVIWFTFELLVRFFA) threads the bilayer. C331 carries the S-palmitoyl cysteine lipid modification. The Cytoplasmic portion of the chain corresponds to 331–341 (CPSKAEFSRNI). The chain crosses the membrane as a helical span at residues 342–362 (MNIIDIVAIFPYFITLGTELA). Over 363 to 380 (EQQPGGGGGGQNGQQAMS) the chain is Extracellular. The helical; Voltage-sensor transmembrane segment at 381–401 (LAILRVIRLVRVFRIFKLSRH) threads the bilayer. The Cytoplasmic portion of the chain corresponds to 402 to 416 (SKGLQILGKTLQASM). The interval 403–416 (KGLQILGKTLQASM) is S4-S5 linker. The helical transmembrane segment at 417 to 438 (RELGLLIFFLFIGVILFSSAVY) threads the bilayer. The Extracellular portion of the chain corresponds to 439–452 (FAEADNQGTHFSSI). The segment at residues 453 to 464 (PDAFWWAVVTMT) is an intramembrane region (helical). The short motif at 465-470 (TVGYGD) is the Selectivity filter element. The stretch at 465-472 (TVGYGDMR) is an intramembrane region. The helical transmembrane segment at 480–508 (IVGSLCAIAGVLTIALPVPVIVSNFNYFY) threads the bilayer. The Cytoplasmic portion of the chain corresponds to 509 to 598 (HRETDHEEQA…CLDTSRETDL (90 aa)). The segment at 517 to 539 (QAALKEEPGSQSRGTSLDAGGQR) is disordered. K521 participates in a covalent cross-link: Glycyl lysine isopeptide (Lys-Gly) (interchain with G-Cter in SUMO). The PDZ-binding signature appears at 596 to 598 (TDL).

It belongs to the potassium channel family. A (Shaker) (TC 1.A.1.2) subfamily. Kv1.5/KCNA5 sub-subfamily. In terms of assembly, homotetramer and heterotetramer of potassium channel proteins. Interacts with DLG1, which enhances channel currents. Forms a ternary complex with DLG1 and CAV3. Interacts with KCNAB1. Interacts with UBE2I. Interacts with XIRP2; the interaction is required for normal action potential configuration in the heart. Glycosylated. Post-translationally, sumoylated on Lys-205, and Lys-521, preferentially with SUMO3. Sumoylation regulates the voltage sensitivity of the channel.

The protein localises to the cell membrane. It catalyses the reaction K(+)(in) = K(+)(out). Its function is as follows. Voltage-gated potassium channel that mediates transmembrane potassium transport in excitable membranes. Forms tetrameric potassium-selective channels through which potassium ions pass in accordance with their electrochemical gradient. The channel alternates between opened and closed conformations in response to the voltage difference across the membrane. Can form functional homotetrameric channels and heterotetrameric channels that contain variable proportions of KCNA1, KCNA2, KCNA4, KCNA5, and possibly other family members as well; channel properties depend on the type of alpha subunits that are part of the channel. Channel properties are modulated by cytoplasmic beta subunits that regulate the subcellular location of the alpha subunits and promote rapid inactivation. Homotetrameric channels display rapid activation and slow inactivation. Required for normal electrical conduction including formation of the infranodal ventricular conduction system and normal action potential configuration, as a result of its interaction with XIRP2. May play a role in regulating the secretion of insulin in normal pancreatic islets. In Oryctolagus cuniculus (Rabbit), this protein is Potassium voltage-gated channel subfamily A member 5 (KCNA5).